A 273-amino-acid polypeptide reads, in one-letter code: Dermonecrotic toxin LhSicTox-alphaIA1i (273 aa).

Residue His5 is part of the active site. The Mg(2+) site is built by Glu25 and Asp27. His41 serves as the catalytic Nucleophile. Cystine bridges form between Cys45-Cys51 and Cys47-Cys190. Asp85 contributes to the Mg(2+) binding site.

This sequence belongs to the arthropod phospholipase D family. Class II subfamily. Mg(2+) serves as cofactor. In terms of tissue distribution, expressed by the venom gland.

The protein resides in the secreted. The catalysed reaction is an N-(acyl)-sphingosylphosphocholine = an N-(acyl)-sphingosyl-1,3-cyclic phosphate + choline. The enzyme catalyses an N-(acyl)-sphingosylphosphoethanolamine = an N-(acyl)-sphingosyl-1,3-cyclic phosphate + ethanolamine. It catalyses the reaction a 1-acyl-sn-glycero-3-phosphocholine = a 1-acyl-sn-glycero-2,3-cyclic phosphate + choline. It carries out the reaction a 1-acyl-sn-glycero-3-phosphoethanolamine = a 1-acyl-sn-glycero-2,3-cyclic phosphate + ethanolamine. Functionally, dermonecrotic toxins cleave the phosphodiester linkage between the phosphate and headgroup of certain phospholipids (sphingolipid and lysolipid substrates), forming an alcohol (often choline) and a cyclic phosphate. This toxin acts on sphingomyelin (SM). It may also act on ceramide phosphoethanolamine (CPE), lysophosphatidylcholine (LPC) and lysophosphatidylethanolamine (LPE), but not on lysophosphatidylserine (LPS), and lysophosphatidylglycerol (LPG). It acts by transphosphatidylation, releasing exclusively cyclic phosphate products as second products. Induces dermonecrosis, hemolysis, increased vascular permeability, edema, inflammatory response, and platelet aggregation. This Loxosceles hirsuta (Recluse spider) protein is Dermonecrotic toxin LhSicTox-alphaIA1i.